We begin with the raw amino-acid sequence, 106 residues long: MTTSLAQQKIRIRLKAFDRRMLDLSCDKIIQTADTTAASAIGPIPLPTKRKIYCVLRSPHVDKDSREHFETRTHRRIIDIYSPSAKTIDALMKLDLPSGVDIEVKL.

Belongs to the universal ribosomal protein uS10 family. In terms of assembly, part of the 30S ribosomal subunit.

Involved in the binding of tRNA to the ribosomes. In Prochlorococcus marinus (strain MIT 9515), this protein is Small ribosomal subunit protein uS10.